The following is a 288-amino-acid chain: Acetylglutamate kinase (288 aa).

Residues 66 to 67 (GG), Arg-88, and Asn-182 each bind substrate.

It belongs to the acetylglutamate kinase family. ArgB subfamily.

It is found in the cytoplasm. The catalysed reaction is N-acetyl-L-glutamate + ATP = N-acetyl-L-glutamyl 5-phosphate + ADP. It participates in amino-acid biosynthesis; L-arginine biosynthesis; N(2)-acetyl-L-ornithine from L-glutamate: step 2/4. Catalyzes the ATP-dependent phosphorylation of N-acetyl-L-glutamate. The chain is Acetylglutamate kinase from Brachyspira hyodysenteriae (strain ATCC 49526 / WA1).